A 555-amino-acid chain; its full sequence is Formate--tetrahydrofolate ligase (555 aa).

An ATP-binding site is contributed by 65–72; it reads TPAGEGKS.

Belongs to the formate--tetrahydrofolate ligase family.

It catalyses the reaction (6S)-5,6,7,8-tetrahydrofolate + formate + ATP = (6R)-10-formyltetrahydrofolate + ADP + phosphate. It functions in the pathway one-carbon metabolism; tetrahydrofolate interconversion. This is Formate--tetrahydrofolate ligase from Staphylococcus aureus (strain Mu3 / ATCC 700698).